Reading from the N-terminus, the 121-residue chain is MASKKVQKIRDKRKARVRAKISGSTERPRLSVFRSSKHIYVQAVADNEGKTIAHSSTISDDVKSKITDVKKVEAAKEVGRSISRKLRDMGIQEVVFDRGSYLYHGRVKALADGAREEGLKF.

Residues M1 to A19 show a composition bias toward basic residues. The disordered stretch occupies residues M1–G23.

It belongs to the universal ribosomal protein uL18 family. Part of the 50S ribosomal subunit; part of the 5S rRNA/L5/L18/L25 subcomplex. Contacts the 5S and 23S rRNAs.

In terms of biological role, this is one of the proteins that bind and probably mediate the attachment of the 5S RNA into the large ribosomal subunit, where it forms part of the central protuberance. The sequence is that of Large ribosomal subunit protein uL18 from Syntrophus aciditrophicus (strain SB).